We begin with the raw amino-acid sequence, 948 residues long: ATPase 2, plasma membrane-type (948 aa).

An N-acetylserine modification is found at Ser-2. Residues 2 to 61 lie on the Cytoplasmic side of the membrane; sequence SSLEDIKNETVDLEKIPIEEVFQQLKCSREGLTTQEGEDRIQIFGPNKLEEKKESKLLKF. The chain crosses the membrane as a helical span at residues 62–81; the sequence is LGFMWNPLSWVMEMAAIMAI. Residues 82–93 are Extracellular-facing; that stretch reads ALANGDGRPPDW. Residues 94 to 114 form a helical membrane-spanning segment; the sequence is QDFVGIICLLVINSTISFIEE. Topologically, residues 115–243 are cytoplasmic; sequence NNAGNAAAAL…GHFQKVLTAI (129 aa). A helical transmembrane segment spans residues 244 to 264; the sequence is GNFCICSIAIGMVIEIIVMYP. Residues 265-273 are Extracellular-facing; sequence IQRRKYRDG. Residues 274–291 traverse the membrane as a helical segment; sequence IDNLLVLLIGGIPIAMPT. At 292-643 the chain is on the cytoplasmic side; it reads VLSVTMAIGS…TSRAIFQRMK (352 aa). The 4-aspartylphosphate intermediate role is filled by Asp-329. Mg(2+) is bound by residues Asp-588 and Asp-592. Residues 644–665 traverse the membrane as a helical segment; it reads NYTIYAVSITIRIVFGFMLIAL. Over 666 to 670 the chain is Extracellular; that stretch reads IWEFD. The helical transmembrane segment at 671-693 threads the bilayer; the sequence is FSAFMVLIIAILNDGTIMTISKD. At 694-709 the chain is on the cytoplasmic side; the sequence is RVKPSPTPDSWKLKEI. A helical membrane pass occupies residues 710–730; sequence FATGVVLGGYQAIMTVIFFWA. The Extracellular portion of the chain corresponds to 731–751; the sequence is AHKTDFFSDTFGVRSIRDNNH. A helical membrane pass occupies residues 752 to 772; that stretch reads ELMGAVYLQVSIISQALIFVT. The Cytoplasmic portion of the chain corresponds to 773–784; that stretch reads RSRSWSFVERPG. Residues 785–805 traverse the membrane as a helical segment; that stretch reads ALLMIAFLIAQLIATLIAVYA. Topologically, residues 806 to 813 are extracellular; that stretch reads NWEFAKIR. Residues 814–834 traverse the membrane as a helical segment; the sequence is GIGWGWAGVIWLYSIVTYFPL. At 835-948 the chain is on the cytoplasmic side; that stretch reads DVFKFAIRYI…DIETPSHYTV (114 aa). Thr-881 carries the phosphothreonine modification. At Ser-899 the chain carries Phosphoserine. Ser-931 carries the phosphoserine; by CIPK11 modification. An interaction with 14-3-3 proteins region spans residues 946–948; that stretch reads YTV. Phosphothreonine is present on Thr-947.

Belongs to the cation transport ATPase (P-type) (TC 3.A.3) family. Type IIIA subfamily. In terms of assembly, binds to 14-3-3 proteins. The binding is induced by phosphorylation of Thr-947 and it activates the H(+)-ATPase. Interacts (via the R-domain) with PSY1R (via C-terminus). Part of a functional complex containing PSKR1, BAK1, CNGC17, and AHA. Interacts with CNGC17 and PSKR1. Interacts with PP2C67/PP2C-D1 at the plasma membrane. Interacts with AHA1. Post-translationally, phosphorylated, probably by PHOT1 and PHOT2, at C-terminal Thr-947 in guard cells in response to blue light to induce stomatal opening. In terms of processing, phosphorylation at Thr-881 by PSY1R. This phosphorylation activates proton pumping. Decreased phosphorylation in response to flg22 elicitation. Phosphorylation at Ser-899 is specifically induced by RALF1, thus leading to the inhibition of proton transport. Increased phosphorylation in response to flg22 elicitation. Post-translationally, phosphorylation of Thr-947 induces the binding to 14-3-3 proteins, but phosphorylation of Ser-931 interferes with this binding no matter whether Thr-947 is phosphorylated or not. Decreased phosphorylation in response to flg22 elicitation. Phosphorylation of Thr-947 is enhanced by the presence of brassinolide (BL) via the BRI1-BIN2 pathway and prior the trigger of hypocotyl elongation. Inactivated by PP2C67/PP2C-D1-mediated Thr-947 dephosphorylation; SAUR19 inhibits the action of PP2C67/PP2C-D1 and thus promotes the active phosphorylated form. In terms of processing, abscisic acid induces dephosphorylation of AHA2 in etiolated seedlings, suppressing ATP hydrolysis and hypocotyl elongation. As to expression, higher levels in roots than in shoots. Expressed in epidermal and root cortex cells, in phloem, xylem and root hairs. Detected in cotyledons, leaves, hypocotyls, roots and root hairs. Expressed in guard cells and mesophyll cells.

It localises to the cell membrane. The enzyme catalyses ATP + H2O + H(+)(in) = ADP + phosphate + 2 H(+)(out). With respect to regulation, regulated by an auto-inhibitory C-terminal domain that can be displaced by phosphorylation of Thr-947 and the subsequent binding of 14-3-3 proteins. Negatively regulated by PKS5. PKS5 phosphorylates Ser-931, inhibiting interaction with the activating 14-3-3 protein. Positively regulated by PSY1R. PSY1R phosphorylates Thr-881, situated in the auto-inhibitory region I of the C-terminal domain, causing pump activation. Negatively regulated by the secreted peptide RALF. After specific binding to FERONIA, RALF causes phosphorylation at Ser-899, mediating the inhibition of proton transport. Activated by lysophospholipids, without the involvement of phosphorylation of Thr-947. This activation is critically dependent on the single autoinhibitory residue Leu-919. Repressed by PP2C-D phosphatases (e.g. PP2C67/PP2C-D1 and PP2C64/PP2C-D5) which dephosphorylates Thr-947. Triggered by SAUR19 via phosphorylation of the C-terminal autoinhibitory domain (e.g. Thr-947), as a result of the inhibition of PP2C67/PP2C-D1. Phosphorylation on Thr residues is repressed by tyrphostin 9, sphingosine, GW5074 and BML-265. By contrast, the fungal phytotoxin fusicoccin (FC) promotes phosphorylation of Thr-947 independently to BHP, thus leading to large stomatal opening. Its function is as follows. The plasma membrane H(+) ATPase of plants and fungi generates a proton gradient that drives the active transport of nutrients by H(+)-symport. The resulting external acidification and/or internal alkinization may mediate growth responses. Involved in maintaining the membrane potential and delta-pH, together forming the plasma membrane protonmotive force (PMF) required for root and hypocotyl elongation and root tropism. Important for root growth and development during different nitrogen regimes. Forms a functional cation-translocating unit with CNGC17 that is activated by PSKR1/BAK1 and possibly other BAK1/RLK complexes. Promotes stomatal opening in response to blue light. This chain is ATPase 2, plasma membrane-type, found in Arabidopsis thaliana (Mouse-ear cress).